A 427-amino-acid chain; its full sequence is Vitamin D3 receptor (427 aa).

A DNA-binding region (nuclear receptor) is located at residues 21-96; it reads PRICGVCGDR…IGMMKEFILT (76 aa). Zn(2+)-binding residues include C24, C27, C41, C44, C60, C66, C76, and C79. 2 NR C4-type zinc fingers span residues 24 to 44 and 60 to 79; these read CGVC…CEGC and CPFN…CQAC. Residues 97-126 are hinge; sequence DEEVQRKREMILKRKEEEALKDSLRPKLSE. The 297-residue stretch at 127–423 folds into the NR LBD domain; it reads EQQRIIAILL…LTPLVLEVFG (297 aa). Y143 is a binding site for calcitriol. The disordered stretch occupies residues 149-201; that stretch reads DFGQFRPPVRGDEEEGTLPSRSSSAHAPSFSGSSSSSCSDQYTSSPDTMEPAS. Residues 168 to 193 show a composition bias toward low complexity; the sequence is SRSSSAHAPSFSGSSSSSCSDQYTSS. S237 is a binding site for calcitriol. An interaction with coactivator LXXLL motif region spans residues 246-264; that stretch reads KMIPGFRDLTAEDQIVLLK. Residues R274, S278, H305, and H397 each contribute to the calcitriol site. The 9aaTAD motif lies at 416 to 424; the sequence is PLVLEVFGN.

This sequence belongs to the nuclear hormone receptor family. NR1 subfamily. Homodimer in the absence of bound vitamin D3. Heterodimer with RXRA after vitamin D3 binding. Interacts with MED1, NCOA1, NCOA2, NCOA3 and NCOA6 coactivators, leading to a strong increase of transcription of target genes. Interacts with the corepressor NCOR1. Interacts with SNW1. Interacts with IRX4, the interaction does not affect its transactivation activity. Interacts with CRY1. Interacts with CRY2 in a ligand-dependent manner. Post-translationally, ubiquitinated by UBR5, leading to its degradation: UBR5 specifically recognizes and binds ligand-bound VDR when it is not associated with coactivators (NCOAs). In presence of NCOAs, the UBR5-degron is not accessible, preventing its ubiquitination and degradation.

The protein localises to the nucleus. It is found in the cytoplasm. In terms of biological role, nuclear receptor for calcitriol, the active form of vitamin D3 which mediates the action of this vitamin on cells. Enters the nucleus upon vitamin D3 binding where it forms heterodimers with the retinoid X receptor/RXR. The VDR-RXR heterodimers bind to specific response elements on DNA and activate the transcription of vitamin D3-responsive target genes. Plays a central role in calcium homeostasis. Also functions as a receptor for the secondary bile acid lithocholic acid (LCA) and its metabolites. The polypeptide is Vitamin D3 receptor (VDR) (Sus scrofa (Pig)).